We begin with the raw amino-acid sequence, 104 residues long: uncharacterized protein (104 aa).

Residues 1–24 (MISTEKSSDAVAMHCPSGDQHNSE) are disordered.

This is an uncharacterized protein from Saccharomyces cerevisiae (strain ATCC 204508 / S288c) (Baker's yeast).